A 941-amino-acid polypeptide reads, in one-letter code: Protein translocase subunit SecA (941 aa).

ATP contacts are provided by residues Gln87, 105-109 (GEGKT), and Asp524. The tract at residues 871 to 919 (DEQPPMPAMEAHKLDPNTGEDQVAQAQSGLAPVAPAKRDPANPATWGKV) is disordered. Residues Cys925, Cys927, Cys936, and His937 each contribute to the Zn(2+) site.

Belongs to the SecA family. Monomer and homodimer. Part of the essential Sec protein translocation apparatus which comprises SecA, SecYEG and auxiliary proteins SecDF-YajC and YidC. It depends on Zn(2+) as a cofactor.

It localises to the cell inner membrane. The protein resides in the cytoplasm. The catalysed reaction is ATP + H2O + cellular proteinSide 1 = ADP + phosphate + cellular proteinSide 2.. Its function is as follows. Part of the Sec protein translocase complex. Interacts with the SecYEG preprotein conducting channel. Has a central role in coupling the hydrolysis of ATP to the transfer of proteins into and across the cell membrane, serving both as a receptor for the preprotein-SecB complex and as an ATP-driven molecular motor driving the stepwise translocation of polypeptide chains across the membrane. The polypeptide is Protein translocase subunit SecA (Afipia carboxidovorans (strain ATCC 49405 / DSM 1227 / KCTC 32145 / OM5) (Oligotropha carboxidovorans)).